The sequence spans 184 residues: Ribosome-recycling factor (184 aa).

Belongs to the RRF family.

It is found in the cytoplasm. Responsible for the release of ribosomes from messenger RNA at the termination of protein biosynthesis. May increase the efficiency of translation by recycling ribosomes from one round of translation to another. This Caldicellulosiruptor saccharolyticus (strain ATCC 43494 / DSM 8903 / Tp8T 6331) protein is Ribosome-recycling factor.